Reading from the N-terminus, the 142-residue chain is Neurofilament heavy polypeptide (142 aa).

The IF rod domain occupies 1–142; sequence MRGAVLRLGA…EAAKVNTDAM (142 aa). A coiled-coil region spans residues 26 to 74; the sequence is IAHVRQRLDDEARQRQEAEAAARALARFAQEAEAARVELQKKAQALQEE.

Belongs to the intermediate filament family. As to quaternary structure, forms heterodimers with NEFL; which can further hetero-oligomerize (in vitro). Forms heterodimers with INA (in vitro). There are a number of repeats of the tripeptide K-S-P, NFH is phosphorylated on a number of the serines in this motif. It is thought that phosphorylation of NFH results in the formation of interfilament cross bridges that are important in the maintenance of axonal caliber. In terms of processing, phosphorylation seems to play a major role in the functioning of the larger neurofilament polypeptides (NF-M and NF-H), the levels of phosphorylation being altered developmentally and coincidentally with a change in the neurofilament function. Post-translationally, phosphorylated in the head and rod regions by the PKC kinase PKN1, leading to the inhibition of polymerization.

Its subcellular location is the cytoplasm. It localises to the cytoskeleton. The protein resides in the cell projection. The protein localises to the axon. Neurofilaments usually contain three intermediate filament proteins: NEFL, NEFM, and NEFH which are involved in the maintenance of neuronal caliber. NEFH has an important function in mature axons that is not subserved by the two smaller NF proteins. May additionally cooperate with the neuronal intermediate filament proteins PRPH and INA to form neuronal filamentous networks. This chain is Neurofilament heavy polypeptide (NEFH), found in Sus scrofa (Pig).